The following is a 690-amino-acid chain: MTGLVGENFRRDGGVIPATITKNLNKSSGRQRAREKMADKEFFLSLLSSAATKRDAKAYLSRFPSVKKPKPPIPRQNQGAVETQSGKENEKPGVNLGSFYGATRSVLETPVFRQGPAPETETAHAIGLDEALHVALVKLANAQSLDDETIQGVALTLAQLTRLGMASCVVVDPGPMQDETTWRKAAAEQADRLSAAIDACDGGKARRLDSVLVKNKDRDLPKIISRQVLLRPLRNNHIVVVTPVAYSEETCKASSVPSSDAMLALTRELAGLERKHDPDEDPRVTAEIFAALQKEVAVDRLIVLDSVGGIPAFKGPQQSHVFVNMEQEFKDIEAELHEAMASIERFVDPSAESDITEAATKSNPISKFVATEVTPLSTGQQKPLIEANGGLMTSTLKGHIENLRLLQQTLTLLPPSSSAIITTPRDVANSARPHQDVLSVSQVGTRRQKNPLIHNLLTDKPVYSSSLPSERRGQTAPSIAPSTFLKRGMPLTILPDPRITPWSPNSPDGHHLTLDDPRIDLPRLVHLIEDSFNRKLDVQDYLSRVNGRLAGLIIAGEYEGGAILTWETPPDIPEQDRHKPENISRLVPYLDKFAVLKRSQGAGGVADIVFNAMVRTCLPGGVCWRSRMDNPVNKWYFERSRGTWKLNGSNWAMFWTTPRVPEEDPLKFRDYEAVCRSIQPSWADKKAVVD.

The disordered stretch occupies residues 62–93 (RFPSVKKPKPPIPRQNQGAVETQSGKENEKPG). Residues 75-84 (RQNQGAVETQ) are compositionally biased toward polar residues. Residues 508-679 (DGHHLTLDDP…DYEAVCRSIQ (172 aa)) form the N-acetyltransferase domain.

Belongs to the acetyltransferase family.

It is found in the mitochondrion. It carries out the reaction L-glutamate + acetyl-CoA = N-acetyl-L-glutamate + CoA + H(+). The protein operates within amino-acid biosynthesis; L-arginine biosynthesis; N(2)-acetyl-L-ornithine from L-glutamate: step 1/4. N-acetylglutamate synthase involved in arginine biosynthesis. This chain is Amino-acid acetyltransferase, mitochondrial (arg2), found in Talaromyces stipitatus (strain ATCC 10500 / CBS 375.48 / QM 6759 / NRRL 1006) (Penicillium stipitatum).